A 347-amino-acid chain; its full sequence is Protein phosphatase 1 regulatory subunit 3G (347 aa).

A disordered region spans residues 1–77 (MDPSGEQLHR…ELQEYRRSRA (77 aa)). Polar residues predominate over residues 13 to 22 (ASSSTSSGDP). Phosphoserine is present on Ser-81. The region spanning 200-339 (EERLRRQRVC…NNEGANYTLR (140 aa)) is the CBM21 domain. Positions 258–286 (DPESVEPLPPLQSGDSGSKAEDSEEGPGT) are disordered.

In terms of biological role, glycogen-targeting subunit for protein phosphatase 1 (PP1). Involved in the regulation of hepatic glycogenesis in a manner coupled to the fasting-feeding cycle and distinct from other glycogen-targeting subunits. The sequence is that of Protein phosphatase 1 regulatory subunit 3G (Ppp1r3g) from Mus musculus (Mouse).